The primary structure comprises 324 residues: Protein ChrB (324 aa).

Its function is as follows. Together with ChrA1, this protein reduces chromate accumulation and is essential for chromate resistance, possibly as a regulatory protein. The polypeptide is Protein ChrB (Cupriavidus metallidurans (strain ATCC 43123 / DSM 2839 / NBRC 102507 / CH34) (Ralstonia metallidurans)).